A 776-amino-acid polypeptide reads, in one-letter code: DNA topoisomerase 1 (776 aa).

A Toprim domain is found at 1–111; it reads MKLVIVESPA…VKSDDFFKRV (111 aa). Mg(2+) contacts are provided by Glu-7 and Asp-80. Residues 132 to 568 form the Topo IA-type catalytic domain; sequence DTNLVNAQQA…FWSGFNHNIE (437 aa). Positions 166 to 171 are interaction with DNA; that stretch reads SAGRVQ. The active-site O-(5'-phospho-DNA)-tyrosine intermediate is Tyr-304. Residues 600 to 627 form a C4-type zinc finger; that stretch reads CPSCNTGELSLKLGKFGAFLACSNYPEC.

It belongs to the type IA topoisomerase family. Monomer. It depends on Mg(2+) as a cofactor.

The catalysed reaction is ATP-independent breakage of single-stranded DNA, followed by passage and rejoining.. Functionally, releases the supercoiling and torsional tension of DNA, which is introduced during the DNA replication and transcription, by transiently cleaving and rejoining one strand of the DNA duplex. Introduces a single-strand break via transesterification at a target site in duplex DNA. The scissile phosphodiester is attacked by the catalytic tyrosine of the enzyme, resulting in the formation of a DNA-(5'-phosphotyrosyl)-enzyme intermediate and the expulsion of a 3'-OH DNA strand. The free DNA strand then undergoes passage around the unbroken strand, thus removing DNA supercoils. Finally, in the religation step, the DNA 3'-OH attacks the covalent intermediate to expel the active-site tyrosine and restore the DNA phosphodiester backbone. In Rickettsia conorii (strain ATCC VR-613 / Malish 7), this protein is DNA topoisomerase 1.